The sequence spans 240 residues: Ubiquinone biosynthesis O-methyltransferase (240 aa).

S-adenosyl-L-methionine contacts are provided by Arg-44, Gly-64, Asp-85, and Met-129.

Belongs to the methyltransferase superfamily. UbiG/COQ3 family.

It catalyses the reaction a 3-demethylubiquinol + S-adenosyl-L-methionine = a ubiquinol + S-adenosyl-L-homocysteine + H(+). The catalysed reaction is a 3-(all-trans-polyprenyl)benzene-1,2-diol + S-adenosyl-L-methionine = a 2-methoxy-6-(all-trans-polyprenyl)phenol + S-adenosyl-L-homocysteine + H(+). It functions in the pathway cofactor biosynthesis; ubiquinone biosynthesis. Functionally, O-methyltransferase that catalyzes the 2 O-methylation steps in the ubiquinone biosynthetic pathway. This Escherichia coli O6:K15:H31 (strain 536 / UPEC) protein is Ubiquinone biosynthesis O-methyltransferase.